The following is a 528-amino-acid chain: Na(+)/H(+) antiporter NhaB (528 aa).

A run of 11 helical transmembrane segments spans residues 23–45 (FAILSFLVINPVVFYLNPFVAGW), 66–86 (PGGLLAIEAVIIGMTSPSQVL), 95–115 (VLLLLIFMVAGIYFMKQLLLF), 139–159 (AFLSAFLDALTVIAVIIAVAV), 203–223 (LLMHAGVGTALGGVCTMVGEP), 241–261 (LRMSPVTVPVFVAGVLTCFLV), 310–330 (LIIGLAFHLASVGLIGLSVII), 349–369 (EEALPFTALLAVFFAIVGVII), 390–410 (LVIFYIAIGLLSMVSDNVFVG), 448–468 (ATPNGQAAFLFLLTSAIAPLI), and 476–496 (VWMALPYTIVLSIVGILAIQF).

This sequence belongs to the NhaB Na(+)/H(+) (TC 2.A.34) antiporter family.

The protein resides in the cell inner membrane. It carries out the reaction 2 Na(+)(in) + 3 H(+)(out) = 2 Na(+)(out) + 3 H(+)(in). Na(+)/H(+) antiporter that extrudes sodium in exchange for external protons. The chain is Na(+)/H(+) antiporter NhaB from Shewanella piezotolerans (strain WP3 / JCM 13877).